The chain runs to 453 residues: Gamma-aminobutyric acid receptor subunit alpha-6 (453 aa).

The N-terminal stretch at 1-19 (MLLLLPWLFSLLWIENAQA) is a signal peptide. At 20–243 (QLEDEGNFYS…FHLQRKMGYF (224 aa)) the chain is on the extracellular side. The N-linked (GlcNAc...) asparagine glycan is linked to N31. R84 contacts 4-aminobutanoate. N128 and N141 each carry an N-linked (GlcNAc...) asparagine glycan. T147 contacts 4-aminobutanoate. The cysteines at positions 156 and 170 are disulfide-linked. A helical membrane pass occupies residues 244–264 (MIQIYTPCIMTVILSQVSFWI). Residues 265-270 (NKESVP) are Cytoplasmic-facing. A helical transmembrane segment spans residues 271–290 (ARTVFGITTVLTMTTLSISA). Residues 291–304 (RHSLPKVSYATAMD) are Extracellular-facing. The chain crosses the membrane as a helical span at residues 305 to 325 (WFIAVCFAFVFSALIEFAAVN). Residues 326-422 (YFTNLQSQKA…GTSKIDQYSR (97 aa)) lie on the Cytoplasmic side of the membrane. Position 375 is a phosphoserine (S375). T403 is modified (phosphothreonine). A helical membrane pass occupies residues 423–443 (ILFPVAFAGFNLVYWIVYLSK). At 444-453 (DTMEVSSTVE) the chain is on the extracellular side.

It belongs to the ligand-gated ion channel (TC 1.A.9) family. Gamma-aminobutyric acid receptor (TC 1.A.9.5) subfamily. GABRA6 sub-subfamily. As to quaternary structure, heteropentamer, formed by a combination of alpha (GABRA1-6), beta (GABRB1-3), gamma (GABRG1-3), delta (GABRD), epsilon (GABRE), rho (GABRR1-3), pi (GABRP) and theta (GABRQ) chains, each subunit exhibiting distinct physiological and pharmacological properties. Binds UBQLN1. In terms of tissue distribution, expressed in brain, in cerebellar granule cells.

The protein resides in the postsynaptic cell membrane. It localises to the cell membrane. It carries out the reaction chloride(in) = chloride(out). Functionally, alpha subunit of the heteropentameric ligand-gated chloride channel gated by gamma-aminobutyric acid (GABA), a major inhibitory neurotransmitter in the brain. GABA-gated chloride channels, also named GABA(A) receptors (GABAAR), consist of five subunits arranged around a central pore and contain GABA active binding site(s) located at the alpha and beta subunit interface(s). When activated by GABA, GABAARs selectively allow the flow of chloride anions across the cell membrane down their electrochemical gradient. Alpha-6/GABRA6 subunits are found at both synaptic and extrasynaptic sites. Chloride influx into the postsynaptic neuron following GABAAR opening decreases the neuron ability to generate a new action potential, thereby reducing nerve transmission. Extrasynaptic alpha-6-containing receptors contribute to the tonic GABAergic inhibition. Alpha-6 subunits are also present on glutamatergic synapses. The protein is Gamma-aminobutyric acid receptor subunit alpha-6 of Rattus norvegicus (Rat).